A 431-amino-acid chain; its full sequence is Na(+)-translocating NADH-quinone reductase subunit F (431 aa).

The helical transmembrane segment at 9-29 threads the bilayer; sequence FICIASLIFCAIGVILAGVIL. The 2Fe-2S ferredoxin-type domain maps to 39–133; the sequence is HPCKLKINDN…DMSLEIEERY (95 aa). Cys-76, Cys-82, Cys-85, and Cys-117 together coordinate [2Fe-2S] cluster. Positions 136–286 constitute an FAD-binding FR-type domain; it reads ASSWEGTVIS…SGPYGESFMK (151 aa). Residues 289–413 are catalytic; the sequence is DRPLIFLIGG…PLHNSSILKL (125 aa).

It belongs to the NqrF family. Composed of six subunits; NqrA, NqrB, NqrC, NqrD, NqrE and NqrF. [2Fe-2S] cluster is required as a cofactor. It depends on FAD as a cofactor.

It is found in the cell inner membrane. It catalyses the reaction a ubiquinone + n Na(+)(in) + NADH + H(+) = a ubiquinol + n Na(+)(out) + NAD(+). NQR complex catalyzes the reduction of ubiquinone-1 to ubiquinol by two successive reactions, coupled with the transport of Na(+) ions from the cytoplasm to the periplasm. The first step is catalyzed by NqrF, which accepts electrons from NADH and reduces ubiquinone-1 to ubisemiquinone by a one-electron transfer pathway. The protein is Na(+)-translocating NADH-quinone reductase subunit F of Chlamydia pneumoniae (Chlamydophila pneumoniae).